The primary structure comprises 755 residues: 1,4-alpha-glucan branching enzyme GlgB (755 aa).

D431 serves as the catalytic Nucleophile. Catalysis depends on E484, which acts as the Proton donor.

This sequence belongs to the glycosyl hydrolase 13 family. GlgB subfamily. In terms of assembly, monomer.

The catalysed reaction is Transfers a segment of a (1-&gt;4)-alpha-D-glucan chain to a primary hydroxy group in a similar glucan chain.. It functions in the pathway glycan biosynthesis; glycogen biosynthesis. Catalyzes the formation of the alpha-1,6-glucosidic linkages in glycogen by scission of a 1,4-alpha-linked oligosaccharide from growing alpha-1,4-glucan chains and the subsequent attachment of the oligosaccharide to the alpha-1,6 position. This is 1,4-alpha-glucan branching enzyme GlgB from Prochlorococcus marinus (strain NATL1A).